Reading from the N-terminus, the 637-residue chain is MNPSPLLHLIDSPQDLRRLDKKQLPRLAGELRAFLLESVGQTGGHFASNLGAVELTIALHYVYDTPEDKLVWDVGHQSYPHKILTGRKNQMHTMRQYGGLAGFPKRCESEYDAFGVGHSSTSIGAALGMAAADKLLGGDRRSVAIIGDGAMTAGQAFEALNCAGDMDVDLLVVLNDNEMSISPNVGALPKYLASNVVRDMHGLLSTVKAQTGKVLDKIPGAMEFAQKVEHKIKTLAEEAEHAKQSLSLFENFGFRYTGPVDGHNVENLVDVLKDLRSRKGPQLLHVITKKGNGYKLAENDPVKYHAVANLPKEGGAQMPSEKEPKPAAKPTYTQVFGKWLCDRAAADSRLVAITPAMREGSGLVEFEQRFPDRYFDVGIAEQHAVTFAGGLACEGMKPVVAIYSTFLQRAYDQLVHDIALQNLPVLFAVDRAGIVGADGPTHAGLYDLSFLRCVPNMIVAAPSDENECRLLLSTCYQADAPAAVRYPRGTGTGAPVSDGMETVEIGKGIIRREGEKTAFIAFGSMVATALAVAEKLNATVADMRFVKPIDEELIVRLARSHDRIVTLEENAEQGGAGGAVLEVLAKHGICKPVLLLGVADTVTEHGDPKKLLDDLGLSAEAVERRVREWLPDRDAAN.

Thiamine diphosphate-binding positions include His76 and Gly117–Ser119. Asp148 contacts Mg(2+). Residues Gly149–Ala150, Asn177, Tyr294, and Glu381 contribute to the thiamine diphosphate site. Asn177 serves as a coordination point for Mg(2+).

This sequence belongs to the transketolase family. DXPS subfamily. As to quaternary structure, homodimer. The cofactor is Mg(2+). Thiamine diphosphate serves as cofactor.

It catalyses the reaction D-glyceraldehyde 3-phosphate + pyruvate + H(+) = 1-deoxy-D-xylulose 5-phosphate + CO2. The protein operates within metabolic intermediate biosynthesis; 1-deoxy-D-xylulose 5-phosphate biosynthesis; 1-deoxy-D-xylulose 5-phosphate from D-glyceraldehyde 3-phosphate and pyruvate: step 1/1. Its function is as follows. Catalyzes the acyloin condensation reaction between C atoms 2 and 3 of pyruvate and glyceraldehyde 3-phosphate to yield 1-deoxy-D-xylulose-5-phosphate (DXP). The chain is 1-deoxy-D-xylulose-5-phosphate synthase from Neisseria gonorrhoeae (strain ATCC 700825 / FA 1090).